Reading from the N-terminus, the 226-residue chain is tRNA (guanine-N(7)-)-methyltransferase (226 aa).

The S-adenosyl-L-methionine site is built by E59, E84, D111, and D134. D134 is an active-site residue. Residue K138 coordinates substrate. The interaction with RNA stretch occupies residues 140 to 145 (RHNKRR). Residues D170 and 205-208 (TKFE) contribute to the substrate site.

This sequence belongs to the class I-like SAM-binding methyltransferase superfamily. TrmB family.

The catalysed reaction is guanosine(46) in tRNA + S-adenosyl-L-methionine = N(7)-methylguanosine(46) in tRNA + S-adenosyl-L-homocysteine. The protein operates within tRNA modification; N(7)-methylguanine-tRNA biosynthesis. Catalyzes the formation of N(7)-methylguanine at position 46 (m7G46) in tRNA. This Chromobacterium violaceum (strain ATCC 12472 / DSM 30191 / JCM 1249 / CCUG 213 / NBRC 12614 / NCIMB 9131 / NCTC 9757 / MK) protein is tRNA (guanine-N(7)-)-methyltransferase.